The following is a 248-amino-acid chain: Ribonuclease 3 (248 aa).

The region spanning 6-136 (LAYLQTLIGS…LIGAIYLDKG (131 aa)) is the RNase III domain. A Mg(2+)-binding site is contributed by Glu49. Residue Asp53 is part of the active site. Positions 122 and 125 each coordinate Mg(2+). Glu125 is a catalytic residue. One can recognise a DRBM domain in the interval 163-231 (NYKSCLIEYS…AKEAMERIIA (69 aa)).

The protein belongs to the ribonuclease III family. As to quaternary structure, homodimer. Requires Mg(2+) as cofactor.

It localises to the cytoplasm. The catalysed reaction is Endonucleolytic cleavage to 5'-phosphomonoester.. Its function is as follows. Digests double-stranded RNA. Involved in the processing of primary rRNA transcript to yield the immediate precursors to the large and small rRNAs (23S and 16S). Processes some mRNAs, and tRNAs when they are encoded in the rRNA operon. Processes pre-crRNA and tracrRNA of type II CRISPR loci if present in the organism. This is Ribonuclease 3 from Chlorobium chlorochromatii (strain CaD3).